We begin with the raw amino-acid sequence, 270 residues long: Phosphatidate cytidylyltransferase (270 aa).

7 helical membrane-spanning segments follow: residues 19-39 (LWLTWVGGVGFTLFSIAIGLA), 53-73 (TAFSRLFGWAWLIVTGILLIL), 76-96 (GALLTIGFLVAGCAILLVTQW), 101-121 (GWPAAGLFYAGFSALSLSLLR), 126-146 (FGFTTIVFLFAVVWSTDIAAY), 183-203 (LVASLVAAPGGWGVPVLALLL), and 248-268 (ALLYLFGAIFAEPDVPSAIFF).

It belongs to the CDS family.

The protein localises to the cell inner membrane. The enzyme catalyses a 1,2-diacyl-sn-glycero-3-phosphate + CTP + H(+) = a CDP-1,2-diacyl-sn-glycerol + diphosphate. The protein operates within phospholipid metabolism; CDP-diacylglycerol biosynthesis; CDP-diacylglycerol from sn-glycerol 3-phosphate: step 3/3. The protein is Phosphatidate cytidylyltransferase (cdsA) of Brucella suis biovar 1 (strain 1330).